The sequence spans 272 residues: Putative pyruvate, phosphate dikinase regulatory protein (272 aa).

151-158 contacts ADP; sequence GISRTSKT.

The protein belongs to the pyruvate, phosphate/water dikinase regulatory protein family. PDRP subfamily.

It carries out the reaction N(tele)-phospho-L-histidyl/L-threonyl-[pyruvate, phosphate dikinase] + ADP = N(tele)-phospho-L-histidyl/O-phospho-L-threonyl-[pyruvate, phosphate dikinase] + AMP + H(+). It catalyses the reaction N(tele)-phospho-L-histidyl/O-phospho-L-threonyl-[pyruvate, phosphate dikinase] + phosphate + H(+) = N(tele)-phospho-L-histidyl/L-threonyl-[pyruvate, phosphate dikinase] + diphosphate. Functionally, bifunctional serine/threonine kinase and phosphorylase involved in the regulation of the pyruvate, phosphate dikinase (PPDK) by catalyzing its phosphorylation/dephosphorylation. This chain is Putative pyruvate, phosphate dikinase regulatory protein, found in Staphylococcus aureus (strain Mu3 / ATCC 700698).